We begin with the raw amino-acid sequence, 864 residues long: MDASYQPEQIEAQAQRYWDEQQSFAAREEREGEKFYCLSMFPYPSGRLHMGHVRNYTIGDVISRYQRMQGRNVLQPMGWDAFGLPAENAAMKHGVPPARWTRENIETMRGQLQRLGFAYDWDREFATCDPEYYRWEQWLFTRLYKKGLVYKKTATVNWDPVDQTVLANEQVVDGRGWRSGAVVERRDIPQWFLRITDYADELLEALDELPGWPEQVRAMQRNWIGRSEGVELDFAVAGHSDTLRVYTTRPDTLYGVTYVGLAPEHPLAAEAAEGNPEMQRFIEDCRKGGVAEADIATMEKRGMDTGLKAVHPLTGEQVPIWVANFVLMEYGHGAVMAVPAHDQRDWEFASKYGLDIRPVVHPSAEERADVSEGAFTDDGVLADSGEFSGLPSAEARQAIGEKLEGLGKGERTVNYRLRDWGISRQRYWGAPIPMIQCPACGDVPVPDEDLPVVLPEDVDVTGGGSPLKDLPAFYQTTCPQCGGEARRETDTFDTFMESSWYYARFACADQKGAMLDERADQWLPVDQYIGGIEHAILHLLYARFFHKLMRDEGLLQSDEPFRNLLTQGMVIAETYYRERGDGGKDWYNPAEVTVQRDERGRPVSAVLEDDGEPVVMGAIEKMSKSKNNGVDPQALIDRYGADTVRLYTMFAAPPDQSLEWSDSAVEGAYRFLRRYYGLVRDHVAAGPVPALDVASLDDAARDLRRKVHETIAKASDDVGRRYTFNTAIAAVMELCNALGKAAANEPSGAARAVLQEGLEAATLILAPIAPHVTHVCWQALGHDEAVIDARWPAVDESALTRDTIELVVQVNGKLRSRLQLPADADKAAAEAAALADEKVQRFTEGKTVRKVIVVPGKLVNIVAN.

The 'HIGH' region signature appears at proline 42–histidine 52. Residues lysine 621–serine 625 carry the 'KMSKS' region motif. Lysine 624 serves as a coordination point for ATP.

This sequence belongs to the class-I aminoacyl-tRNA synthetase family.

It is found in the cytoplasm. It catalyses the reaction tRNA(Leu) + L-leucine + ATP = L-leucyl-tRNA(Leu) + AMP + diphosphate. This is Leucine--tRNA ligase from Alkalilimnicola ehrlichii (strain ATCC BAA-1101 / DSM 17681 / MLHE-1).